A 116-amino-acid chain; its full sequence is S-adenosylmethionine decarboxylase proenzyme (116 aa).

S63 (schiff-base intermediate with substrate; via pyruvic acid) is an active-site residue. S63 carries the post-translational modification Pyruvic acid (Ser); by autocatalysis. The active-site Proton acceptor; for processing activity is H68. C83 (proton donor; for catalytic activity) is an active-site residue.

The protein belongs to the prokaryotic AdoMetDC family. Type 1 subfamily. As to quaternary structure, heterotetramer of two alpha and two beta chains arranged as a dimer of alpha/beta heterodimers. The cofactor is pyruvate. In terms of processing, is synthesized initially as an inactive proenzyme. Formation of the active enzyme involves a self-maturation process in which the active site pyruvoyl group is generated from an internal serine residue via an autocatalytic post-translational modification. Two non-identical subunits are generated from the proenzyme in this reaction, and the pyruvate is formed at the N-terminus of the alpha chain, which is derived from the carboxyl end of the proenzyme. The post-translation cleavage follows an unusual pathway, termed non-hydrolytic serinolysis, in which the side chain hydroxyl group of the serine supplies its oxygen atom to form the C-terminus of the beta chain, while the remainder of the serine residue undergoes an oxidative deamination to produce ammonia and the pyruvoyl group blocking the N-terminus of the alpha chain.

It catalyses the reaction S-adenosyl-L-methionine + H(+) = S-adenosyl 3-(methylsulfanyl)propylamine + CO2. It functions in the pathway amine and polyamine biosynthesis; S-adenosylmethioninamine biosynthesis; S-adenosylmethioninamine from S-adenosyl-L-methionine: step 1/1. Functionally, catalyzes the decarboxylation of S-adenosylmethionine to S-adenosylmethioninamine (dcAdoMet), the propylamine donor required for the synthesis of the polyamines spermine and spermidine from the diamine putrescine. The chain is S-adenosylmethionine decarboxylase proenzyme from Clostridium botulinum (strain 657 / Type Ba4).